We begin with the raw amino-acid sequence, 165 residues long: ATP synthase subunit b (165 aa).

A helical membrane pass occupies residues 5-27 (INSTTLGNIIITLGSVFLLYYLI).

Belongs to the ATPase B chain family. As to quaternary structure, F-type ATPases have 2 components, F(1) - the catalytic core - and F(0) - the membrane proton channel. F(1) has five subunits: alpha(3), beta(3), gamma(1), delta(1), epsilon(1). F(0) has three main subunits: a(1), b(2) and c(10-14). The alpha and beta chains form an alternating ring which encloses part of the gamma chain. F(1) is attached to F(0) by a central stalk formed by the gamma and epsilon chains, while a peripheral stalk is formed by the delta and b chains.

It localises to the cell membrane. Its function is as follows. F(1)F(0) ATP synthase produces ATP from ADP in the presence of a proton or sodium gradient. F-type ATPases consist of two structural domains, F(1) containing the extramembraneous catalytic core and F(0) containing the membrane proton channel, linked together by a central stalk and a peripheral stalk. During catalysis, ATP synthesis in the catalytic domain of F(1) is coupled via a rotary mechanism of the central stalk subunits to proton translocation. Functionally, component of the F(0) channel, it forms part of the peripheral stalk, linking F(1) to F(0). In Streptococcus thermophilus (strain CNRZ 1066), this protein is ATP synthase subunit b.